A 557-amino-acid chain; its full sequence is Dihydroxy-acid dehydratase (557 aa).

Cysteine 50 is a [2Fe-2S] cluster binding site. Aspartate 82 serves as a coordination point for Mg(2+). Cysteine 123 serves as a coordination point for [2Fe-2S] cluster. Positions 124 and 125 each coordinate Mg(2+). N6-carboxylysine is present on lysine 125. Cysteine 195 provides a ligand contact to [2Fe-2S] cluster. Mg(2+) is bound at residue glutamate 447. Serine 473 serves as the catalytic Proton acceptor.

Belongs to the IlvD/Edd family. As to quaternary structure, homodimer. [2Fe-2S] cluster is required as a cofactor. It depends on Mg(2+) as a cofactor.

It catalyses the reaction (2R)-2,3-dihydroxy-3-methylbutanoate = 3-methyl-2-oxobutanoate + H2O. The catalysed reaction is (2R,3R)-2,3-dihydroxy-3-methylpentanoate = (S)-3-methyl-2-oxopentanoate + H2O. Its pathway is amino-acid biosynthesis; L-isoleucine biosynthesis; L-isoleucine from 2-oxobutanoate: step 3/4. The protein operates within amino-acid biosynthesis; L-valine biosynthesis; L-valine from pyruvate: step 3/4. In terms of biological role, functions in the biosynthesis of branched-chain amino acids. Catalyzes the dehydration of (2R,3R)-2,3-dihydroxy-3-methylpentanoate (2,3-dihydroxy-3-methylvalerate) into 2-oxo-3-methylpentanoate (2-oxo-3-methylvalerate) and of (2R)-2,3-dihydroxy-3-methylbutanoate (2,3-dihydroxyisovalerate) into 2-oxo-3-methylbutanoate (2-oxoisovalerate), the penultimate precursor to L-isoleucine and L-valine, respectively. The polypeptide is Dihydroxy-acid dehydratase (Herminiimonas arsenicoxydans).